The sequence spans 338 residues: Lipoate-protein ligase A (338 aa).

The BPL/LPL catalytic domain occupies 29–216 (SPDQRVLFLW…AFFAYYDEQV (188 aa)). ATP is bound by residues arginine 71, 76-79 (GAVF), and lysine 134. Lysine 134 is a binding site for (R)-lipoate.

This sequence belongs to the LplA family. As to quaternary structure, monomer.

The protein resides in the cytoplasm. The catalysed reaction is L-lysyl-[lipoyl-carrier protein] + (R)-lipoate + ATP = N(6)-[(R)-lipoyl]-L-lysyl-[lipoyl-carrier protein] + AMP + diphosphate + H(+). It functions in the pathway protein modification; protein lipoylation via exogenous pathway; protein N(6)-(lipoyl)lysine from lipoate: step 1/2. The protein operates within protein modification; protein lipoylation via exogenous pathway; protein N(6)-(lipoyl)lysine from lipoate: step 2/2. In terms of biological role, catalyzes both the ATP-dependent activation of exogenously supplied lipoate to lipoyl-AMP and the transfer of the activated lipoyl onto the lipoyl domains of lipoate-dependent enzymes. The chain is Lipoate-protein ligase A from Yersinia pseudotuberculosis serotype IB (strain PB1/+).